The primary structure comprises 284 residues: F-box protein PP2-B5 (284 aa).

An F-box domain is found at 32 to 80 (ASFDDLPDDCLAIISSFTSTPRDAFLAALVSKSFGLQFNSDSVWEKFLP).

The protein is F-box protein PP2-B5 (PP2B5) of Arabidopsis thaliana (Mouse-ear cress).